The primary structure comprises 196 residues: Signal peptidase complex catalytic subunit SEC11 (196 aa).

Topologically, residues 1 to 14 (MLSSLSPYMANPRQ) are cytoplasmic. Residues 15-33 (TFTQVLNFALVLSTAFMLW) traverse the membrane as a helical; Signal-anchor for type II membrane protein segment. The Lumenal segment spans residues 34–196 (KGLSVYTNSA…MGLMVILQRE (163 aa)). Active-site charge relay system residues include S53 and H92. The segment at 101–133 (VPGKDKTKKGGKQGVEASPSSLESQKLLTKGDN) is disordered. Over residues 118–133 (SPSSLESQKLLTKGDN) the composition is skewed to polar residues. The N-linked (GlcNAc...) asparagine glycan is linked to N134. Catalysis depends on D138, which acts as the Charge relay system. A C-terminal short (CTS) helix region spans residues 182–193 (VLLGFMGLMVIL).

Belongs to the peptidase S26B family. As to quaternary structure, component of the signal peptidase complex (SPC) composed of a catalytic subunit SEC11 and three accessory subunits SPC1, SPC2 and SPC3. The complex induces a local thinning of the ER membrane which is used to measure the length of the signal peptide (SP) h-region of protein substrates. This ensures the selectivity of the complex towards h-regions shorter than 18-20 amino acids. SPC associates with the translocon complex.

It localises to the endoplasmic reticulum membrane. It catalyses the reaction Cleavage of hydrophobic, N-terminal signal or leader sequences from secreted and periplasmic proteins.. In terms of biological role, catalytic component of the signal peptidase complex (SPC) which catalyzes the cleavage of N-terminal signal sequences from nascent proteins as they are translocated into the lumen of the endoplasmic reticulum. Specifically cleaves N-terminal signal peptides that contain a hydrophobic alpha-helix (h-region) shorter than 18-20 amino acids. The polypeptide is Signal peptidase complex catalytic subunit SEC11 (SEC11) (Ajellomyces dermatitidis (strain ER-3 / ATCC MYA-2586) (Blastomyces dermatitidis)).